The chain runs to 1192 residues: ATP-dependent helicase/deoxyribonuclease subunit B (1192 aa).

This sequence belongs to the helicase family. AddB/RexB type 2 subfamily. As to quaternary structure, heterodimer of AddA and RexB. Mg(2+) serves as cofactor.

In terms of biological role, the heterodimer acts as both an ATP-dependent DNA helicase and an ATP-dependent, dual-direction single-stranded exonuclease. Recognizes the chi site generating a DNA molecule suitable for the initiation of homologous recombination. This subunit has 5' -&gt; 3' nuclease activity but not helicase activity. This chain is ATP-dependent helicase/deoxyribonuclease subunit B, found in Pediococcus pentosaceus (strain ATCC 25745 / CCUG 21536 / LMG 10740 / 183-1w).